We begin with the raw amino-acid sequence, 642 residues long: Threonine--tRNA ligase (642 aa).

A TGS domain is found at 1-61 (MPVITLPDGS…ETDAELSIIT (61 aa)). The interval 243-534 (DHRKIGKQLD…LIEEYAGRFP (292 aa)) is catalytic. The Zn(2+) site is built by Cys-334, His-385, and His-511.

Belongs to the class-II aminoacyl-tRNA synthetase family. As to quaternary structure, homodimer. The cofactor is Zn(2+).

It is found in the cytoplasm. The catalysed reaction is tRNA(Thr) + L-threonine + ATP = L-threonyl-tRNA(Thr) + AMP + diphosphate + H(+). In terms of biological role, catalyzes the attachment of threonine to tRNA(Thr) in a two-step reaction: L-threonine is first activated by ATP to form Thr-AMP and then transferred to the acceptor end of tRNA(Thr). Also edits incorrectly charged L-seryl-tRNA(Thr). This chain is Threonine--tRNA ligase, found in Shewanella oneidensis (strain ATCC 700550 / JCM 31522 / CIP 106686 / LMG 19005 / NCIMB 14063 / MR-1).